Reading from the N-terminus, the 106-residue chain is UPF0145 protein PSEEN3024 (106 aa).

Belongs to the UPF0145 family.

In Pseudomonas entomophila (strain L48), this protein is UPF0145 protein PSEEN3024.